Consider the following 1481-residue polypeptide: DNA excision repair protein ERCC-6 (1481 aa).

The segment at 1 to 506 (MFHEEVPNST…GFLFKKLFKY (506 aa)) is N-terminal domain; essential for its chromatin remodeling activity. At Ser-158 the chain carries Phosphoserine; by CDK2. Position 170 is an N6-methylated lysine; by EHMT2 (Lys-170). Lys-256 is covalently cross-linked (Glycyl lysine isopeptide (Lys-Gly) (interchain with G-Cter in SUMO2)). Lys-298 carries the post-translational modification N6-methylated lysine; by EHMT2. Residues 309–452 (AIETKADQRS…RKVARRQDDG (144 aa)) are disordered. The segment covering 327-337 (RLKKHSRKLQR) has biased composition (basic residues). A compositionally biased stretch (basic and acidic residues) spans 353–363 (KPLEPEVRPEA). 2 stretches are compositionally biased toward acidic residues: residues 378–390 (DGEE…EEEG) and 420–435 (EIDD…EDEA). Phosphoserine is present on residues Ser-428 and Ser-429. Lys-444 bears the N6-methylated lysine; by EHMT2 mark. 2 positions are modified to phosphoserine: Ser-482 and Ser-485. Positions 515–691 (WELHCQQAGG…WSLFDFIFPG (177 aa)) constitute a Helicase ATP-binding domain. 528–535 (DEMGLGKT) is a binding site for ATP. The DEAH box signature appears at 642–645 (DEGH). The Helicase C-terminal domain maps to 839–998 (VVESLLKIWH…RRFFKSNDLY (160 aa)). Disordered stretches follow at residues 1040–1096 (LGTD…NRAS), 1114–1238 (SVMS…DRSS), and 1307–1372 (GHRG…GAPS). Lys-1047 is modified (N6-methylated lysine; by EHMT2). Residues 1138-1147 (ASTSEKQGSS) show a composition bias toward polar residues. The segment covering 1192-1201 (QPKQKAKNSK) has biased composition (basic residues). Over residues 1202-1212 (HCRDAKFEGTR) the composition is skewed to basic and acidic residues. Polar residues predominate over residues 1330-1345 (LPVQHPSSLTEKTQNN). Residues 1346–1364 (MKKEGKAHTPEHFSGKEDG) are compositionally biased toward basic and acidic residues. The CSA-interacting motif (CIM) signature appears at 1373–1385 (SSSLLARMRARNH). Positions 1387 to 1416 (ILPERLESDSEHLAEAAAVPPCGTEHDDLL) are ubiquitin-binding domain (UBD). Positions 1417–1481 (VDMRNFIAFQ…GIWKLKPEYC (65 aa)) are winged-helix domain (WHD). The segment at 1434-1481 (STQEILQEFESKLSVAQSCVFRELLRNLCNFHRTPGGEGIWKLKPEYC) is essential for its interaction with RNA polymerase II, transcription-coupled nucleotide excision repair activity, association with chromatin after UV irradiation and for mediating the UV-induced translocation of ERRC8 to the nuclear matrix.

The protein belongs to the SNF2/RAD54 helicase family. Homodimer. Binds DNA. Interacts with ERCC8. Interacts with RNA polymerase II; interaction is enhanced by UV irradiation. Component of the B-WICH complex, at least composed of SMARCA5/SNF2H, BAZ1B/WSTF, SF3B1, DEK, MYO1C, ERCC6, MYBBP1A and DDX21. Interacts with KIAA1530/UVSSA. Interacts with ELOA and CUL5; the interaction is induced by DNA damaging agents or by inhibitors of RNA polymerase II elongation. Interacts (via WHD region) with RIF1. Interacts with SMARCC2/BAF170, SMARCB1/BAF47 and the neuron-specific chromatin remodeling complex (nBAF complex). Interacts with ERCC5/XPG (via C-terminus); the interaction stimulates ERCC6/CSB binding to DNA repair bubble and ERCC6/CSB ATPase activity. May form a complex composed of RNA polymerase II, ERCC6/CSB and ERCC5/XPG which associates with the DNA repair bubble during transcription-coupled nucleotide excision repair. Interacts with CAND1, CSTF1, DDX3X, DDX5, DDX17, DDX23, DHX36, HDAC1, HNRNPU, MTA2, PRPF3, PSMD3, RBBP4, SFPQ, SMARCA1, SMARCA2, TOP1, USP7 and XRCC5. In terms of processing, phosphorylated in a cell cycle-dependent manner at Ser-158 by cyclin A-CDK2 in response to DNA damage. Phosphorylation at this site promotes the intramolecular interaction of the N-terminal domain with the helicase ATP-binding domain, thereby probably releasing the inhibitory effect of the N-terminal domain on its ATPase activity. Phosphorylation is essential for its chromatin remodeling activity. Post-translationally, ubiquitinated at the C-terminus. Ubiquitination by the CSA complex leads to ERCC6 proteasomal degradation in a UV-dependent manner. Stabilized following interaction with KIAA1530/UVSSA, which promotes recruitment of deubiquitinating enzyme USP7, leading to deubiquitination of ERCC6 thereby preventing UV-induced degradation of ERCC6 by the proteasome.

Its subcellular location is the nucleus. The protein resides in the chromosome. The enzyme catalyses ATP + H2O = ADP + phosphate + H(+). Essential factor involved in transcription-coupled nucleotide excision repair (TC-NER), a process during which RNA polymerase II-blocking lesions are rapidly removed from the transcribed strand of active genes. Plays a central role in the initiation of the TC-NER process: specifically recognizes and binds RNA polymerase II stalled at a lesion, and mediates recruitment of ERCC8/CSA, initiating DNA damage excision by TFIIH recruitment. Upon DNA-binding, it locally modifies DNA conformation by wrapping the DNA around itself, thereby modifying the interface between stalled RNA polymerase II and DNA. Acts as a chromatin remodeler at DSBs; DNA-dependent ATPase-dependent activity is essential for this function. Plays an important role in regulating the choice of the DNA double-strand breaks (DSBs) repair pathway and G2/M checkpoint activation; DNA-dependent ATPase activity is essential for this function. Regulates the DNA repair pathway choice by inhibiting non-homologous end joining (NHEJ), thereby promoting the homologous recombination (HR)-mediated repair of DSBs during the S/G2 phases of the cell cycle. Mediates the activation of the ATM- and CHEK2-dependent DNA damage responses thus preventing premature entry of cells into mitosis following the induction of DNA DSBs. Remodels chromatin by evicting histones from chromatin flanking DSBs, limiting RIF1 accumulation at DSBs thereby promoting BRCA1-mediated HR. Required for stable recruitment of ELOA and CUL5 to DNA damage sites. Also involved in UV-induced translocation of ERCC8 to the nuclear matrix. Essential for neuronal differentiation and neuritogenesis; regulates transcription and chromatin remodeling activities required during neurogenesis. This chain is DNA excision repair protein ERCC-6 (Ercc6), found in Mus musculus (Mouse).